We begin with the raw amino-acid sequence, 225 residues long: PKHD-type hydroxylase YbiX (225 aa).

The 100-residue stretch at 78-177 (TLSTPLFNRY…RVASFMWIQS (100 aa)) folds into the Fe2OG dioxygenase domain. Fe cation is bound by residues His96, Asp98, and His158. Arg168 serves as a coordination point for 2-oxoglutarate.

Fe(2+) serves as cofactor. The cofactor is L-ascorbate.

The sequence is that of PKHD-type hydroxylase YbiX from Shigella dysenteriae serotype 1 (strain Sd197).